The sequence spans 150 residues: Globin-3 (150 aa).

Positions Pro-11 to Tyr-150 constitute a Globin domain. His-74 and His-106 together coordinate heme b.

It belongs to the globin family. As to quaternary structure, monomer.

The chain is Globin-3 from Mordacia mordax (Southern hemisphere lamprey).